Here is a 486-residue protein sequence, read N- to C-terminus: Cardiolipin synthase A (486 aa).

A run of 2 helical transmembrane segments spans residues 3 to 23 (TFYT…IAGV) and 38 to 58 (MAWL…YLSV). 2 PLD phosphodiesterase domains span residues 219-246 (MDLR…VDPR) and 399-426 (EGGL…DMRS). Active-site residues include histidine 224, lysine 226, aspartate 231, histidine 404, lysine 406, and aspartate 411.

It belongs to the phospholipase D family. Cardiolipin synthase subfamily. ClsA sub-subfamily.

It localises to the cell inner membrane. The catalysed reaction is 2 a 1,2-diacyl-sn-glycero-3-phospho-(1'-sn-glycerol) = a cardiolipin + glycerol. In terms of biological role, catalyzes the reversible phosphatidyl group transfer from one phosphatidylglycerol molecule to another to form cardiolipin (CL) (diphosphatidylglycerol) and glycerol. The protein is Cardiolipin synthase A of Salmonella choleraesuis (strain SC-B67).